The primary structure comprises 283 residues: MSFTSRLKKELFIKAQNLVPQHQLSRVVGKVAASENPILKAAVIHAFKTKYGIDLSIAEQGNALKYKSFNDFFTRALKDGVRLVDENPDSIVSPADGAISQIGKITAGEVFQAKGQSFSVEKLIGDPQLAQPFQEGEFATVYLSPRDYHRVHMPFSGTLTETLYVPGELFSVNQVTAENVPGLFARNERMVCLFDTELGRMAVVLVGAMIVAGIETVATGKVKPSGRIELQHHELKLEKGAELGRFYLGSTAIILFEKDKIEWEKRYKAESVVVMGERMGHTL.

Active-site charge relay system; for autoendoproteolytic cleavage activity residues include D96, H152, and S250. S250 (schiff-base intermediate with substrate; via pyruvic acid; for decarboxylase activity) is an active-site residue. Residue S250 is modified to Pyruvic acid (Ser); by autocatalysis.

Belongs to the phosphatidylserine decarboxylase family. PSD-B subfamily. Prokaryotic type I sub-subfamily. In terms of assembly, heterodimer of a large membrane-associated beta subunit and a small pyruvoyl-containing alpha subunit. Requires pyruvate as cofactor. Post-translationally, is synthesized initially as an inactive proenzyme. Formation of the active enzyme involves a self-maturation process in which the active site pyruvoyl group is generated from an internal serine residue via an autocatalytic post-translational modification. Two non-identical subunits are generated from the proenzyme in this reaction, and the pyruvate is formed at the N-terminus of the alpha chain, which is derived from the carboxyl end of the proenzyme. The autoendoproteolytic cleavage occurs by a canonical serine protease mechanism, in which the side chain hydroxyl group of the serine supplies its oxygen atom to form the C-terminus of the beta chain, while the remainder of the serine residue undergoes an oxidative deamination to produce ammonia and the pyruvoyl prosthetic group on the alpha chain. During this reaction, the Ser that is part of the protease active site of the proenzyme becomes the pyruvoyl prosthetic group, which constitutes an essential element of the active site of the mature decarboxylase.

Its subcellular location is the cell membrane. It catalyses the reaction a 1,2-diacyl-sn-glycero-3-phospho-L-serine + H(+) = a 1,2-diacyl-sn-glycero-3-phosphoethanolamine + CO2. It functions in the pathway phospholipid metabolism; phosphatidylethanolamine biosynthesis; phosphatidylethanolamine from CDP-diacylglycerol: step 2/2. In terms of biological role, catalyzes the formation of phosphatidylethanolamine (PtdEtn) from phosphatidylserine (PtdSer). In Acinetobacter baumannii (strain ATCC 17978 / DSM 105126 / CIP 53.77 / LMG 1025 / NCDC KC755 / 5377), this protein is Phosphatidylserine decarboxylase proenzyme.